The sequence spans 345 residues: 4-hydroxyproline 2-epimerase (345 aa).

Position 85 (glutamine 85) interacts with substrate. Serine 93 acts as the Proton acceptor in catalysis. Residues 94–95 (GS) and aspartate 251 contribute to the substrate site. The active-site Proton donor is cysteine 255. 256–257 (GT) contributes to the substrate binding site.

The protein belongs to the proline racemase family.

The enzyme catalyses trans-4-hydroxy-L-proline = cis-4-hydroxy-D-proline. Its function is as follows. Catalyzes the epimerization of trans-4-hydroxy-L-proline (t4LHyp) to cis-4-hydroxy-D-proline (c4DHyp). May be involved in a degradation pathway of t4LHyp. Can also catalyze the epimerization of trans-3-hydroxy-L-proline (t3LHyp) to cis-3-hydroxy-D-proline (c3DHyp) in vitro, albeit with 2-fold lower efficiency. Displays no proline racemase activity. The polypeptide is 4-hydroxyproline 2-epimerase (Rhizobium etli (strain ATCC 51251 / DSM 11541 / JCM 21823 / NBRC 15573 / CFN 42)).